Here is a 162-residue protein sequence, read N- to C-terminus: Large ribosomal subunit protein uL15 (162 aa).

Basic and acidic residues predominate over residues 1–13 (MKLNEIRDNEGAT). The segment at 1 to 37 (MKLNEIRDNEGATKNRMRVGRGIGSGKGKTAGRGVKG) is disordered. Gly residues predominate over residues 21 to 35 (RGIGSGKGKTAGRGV).

The protein belongs to the universal ribosomal protein uL15 family. In terms of assembly, part of the 50S ribosomal subunit.

Functionally, binds to the 23S rRNA. The protein is Large ribosomal subunit protein uL15 of Methylobacterium nodulans (strain LMG 21967 / CNCM I-2342 / ORS 2060).